Consider the following 319-residue polypeptide: Acetyl-coenzyme A carboxylase carboxyl transferase subunit alpha (319 aa).

A CoA carboxyltransferase C-terminal domain is found at 35–296; the sequence is NIDEEVHRLR…KAQLLEDLAD (262 aa).

It belongs to the AccA family. As to quaternary structure, acetyl-CoA carboxylase is a heterohexamer composed of biotin carboxyl carrier protein (AccB), biotin carboxylase (AccC) and two subunits each of ACCase subunit alpha (AccA) and ACCase subunit beta (AccD).

The protein localises to the cytoplasm. It carries out the reaction N(6)-carboxybiotinyl-L-lysyl-[protein] + acetyl-CoA = N(6)-biotinyl-L-lysyl-[protein] + malonyl-CoA. It functions in the pathway lipid metabolism; malonyl-CoA biosynthesis; malonyl-CoA from acetyl-CoA: step 1/1. Functionally, component of the acetyl coenzyme A carboxylase (ACC) complex. First, biotin carboxylase catalyzes the carboxylation of biotin on its carrier protein (BCCP) and then the CO(2) group is transferred by the carboxyltransferase to acetyl-CoA to form malonyl-CoA. The protein is Acetyl-coenzyme A carboxylase carboxyl transferase subunit alpha of Salmonella agona (strain SL483).